A 75-amino-acid polypeptide reads, in one-letter code: Small ribosomal subunit protein eS28 (75 aa).

Belongs to the eukaryotic ribosomal protein eS28 family.

This Natronomonas pharaonis (strain ATCC 35678 / DSM 2160 / CIP 103997 / JCM 8858 / NBRC 14720 / NCIMB 2260 / Gabara) (Halobacterium pharaonis) protein is Small ribosomal subunit protein eS28.